Here is a 638-residue protein sequence, read N- to C-terminus: Chaperone protein HtpG (638 aa).

Residues methionine 1–arginine 345 are a; substrate-binding. The b stretch occupies residues glutamate 346–asparagine 560. The tract at residues methionine 561–leucine 638 is c.

The protein belongs to the heat shock protein 90 family. In terms of assembly, homodimer.

It is found in the cytoplasm. In terms of biological role, molecular chaperone. Has ATPase activity. This Streptomyces coelicolor (strain ATCC BAA-471 / A3(2) / M145) protein is Chaperone protein HtpG.